The chain runs to 304 residues: UDP-N-acetylenolpyruvoylglucosamine reductase (304 aa).

Residues 31-196 form the FAD-binding PCMH-type domain; that stretch reads RVGGPAERFY…VAAELELAPG (166 aa). Arginine 176 is an active-site residue. Catalysis depends on serine 225, which acts as the Proton donor. Glutamate 295 is an active-site residue.

This sequence belongs to the MurB family. The cofactor is FAD.

It localises to the cytoplasm. The enzyme catalyses UDP-N-acetyl-alpha-D-muramate + NADP(+) = UDP-N-acetyl-3-O-(1-carboxyvinyl)-alpha-D-glucosamine + NADPH + H(+). It participates in cell wall biogenesis; peptidoglycan biosynthesis. Functionally, cell wall formation. This chain is UDP-N-acetylenolpyruvoylglucosamine reductase, found in Methylococcus capsulatus (strain ATCC 33009 / NCIMB 11132 / Bath).